The sequence spans 185 residues: ATP synthase subunit b (185 aa).

The chain crosses the membrane as a helical span at residues 28-48 (VVLVGFAVLMYIVVKFVVPMF).

This sequence belongs to the ATPase B chain family. As to quaternary structure, F-type ATPases have 2 components, F(1) - the catalytic core - and F(0) - the membrane proton channel. F(1) has five subunits: alpha(3), beta(3), gamma(1), delta(1), epsilon(1). F(0) has three main subunits: a(1), b(2) and c(10-14). The alpha and beta chains form an alternating ring which encloses part of the gamma chain. F(1) is attached to F(0) by a central stalk formed by the gamma and epsilon chains, while a peripheral stalk is formed by the delta and b chains.

It localises to the cell membrane. Functionally, f(1)F(0) ATP synthase produces ATP from ADP in the presence of a proton or sodium gradient. F-type ATPases consist of two structural domains, F(1) containing the extramembraneous catalytic core and F(0) containing the membrane proton channel, linked together by a central stalk and a peripheral stalk. During catalysis, ATP synthesis in the catalytic domain of F(1) is coupled via a rotary mechanism of the central stalk subunits to proton translocation. Its function is as follows. Component of the F(0) channel, it forms part of the peripheral stalk, linking F(1) to F(0). The sequence is that of ATP synthase subunit b from Paenarthrobacter aurescens (strain TC1).